Consider the following 352-residue polypeptide: C-C chemokine receptor type 5 (352 aa).

The Extracellular segment spans residues 1–30 (MDYQVSSPIYDINYYTSEPCQKINVKQIAA). A Sulfotyrosine modification is found at Y3. 2 O-linked (GalNAc...) serine glycosylation sites follow: S6 and S7. A sulfotyrosine mark is found at Y10, Y14, and Y15. 2 cysteine pairs are disulfide-bonded: C20–C269 and C101–C178. A helical membrane pass occupies residues 31 to 58 (RLLPPLYSLVFIFGFVGNMLVILILINC). Over 59–68 (KRLKSMTDIY) the chain is Cytoplasmic. The helical transmembrane segment at 69–89 (LLNLAISDLFFLLTVPFWAHY) threads the bilayer. Residues 90–102 (AAAQWDFGNTMCQ) are Extracellular-facing. The helical transmembrane segment at 103-124 (LLTGLYFIGFFSGIFFIILLTI) threads the bilayer. Residues 125–141 (DRYLAVVHAVFALKART) lie on the Cytoplasmic side of the membrane. The helical transmembrane segment at 142–166 (VTFGVVTSVITWVVAVFASLPGIIF) threads the bilayer. The Extracellular segment spans residues 167–198 (TRSQKEGLHYTCSSHFPYSQYQFWKNFQTLKI). A helical membrane pass occupies residues 199–218 (VILGLVLPLLVMVICYSGIL). At 219 to 235 (KTLLRCRNEKKRHRAVR) the chain is on the cytoplasmic side. Residues 236–260 (LIFTIMIVYFLFWAPYNIVLLLNTF) form a helical membrane-spanning segment. Topologically, residues 261 to 277 (QEFFGLNNCSSSNRLDQ) are extracellular. A helical transmembrane segment spans residues 278–301 (AMQVTETLGMTHCCINPIIYAFVG). Over 302–352 (EKFRNYLLVFFQKHIAKRFCKCCSIFQQEAPERASSVYTRSTGEQEISVGL) the chain is Cytoplasmic. S-palmitoyl cysteine attachment occurs at residues C321, C323, and C324. Residues S336, S337, S342, and S349 each carry the phosphoserine; by BARK1 modification.

Belongs to the G-protein coupled receptor 1 family. As to quaternary structure, interacts with PRAF2. Efficient ligand binding to CCL3/MIP-1alpha and CCL4/MIP-1beta requires sulfation, O-glycosylation and sialic acid modifications. Glycosylation on Ser-6 is required for efficient binding of CCL4. Interacts with GRK2. Interacts with ARRB1 and ARRB2. Interacts with CNIH4. Interacts with S100A4; this interaction stimulates T-lymphocyte chemotaxis. (Microbial infection) Interacts with HIV-1 surface protein gp120. In terms of assembly, (Microbial infection) May interact with human cytomegalovirus/HHV-5 protein UL78. Sulfated on at least 2 of the N-terminal tyrosines. Sulfation contributes to the efficiency of HIV-1 entry and is required for efficient binding of the chemokines, CCL3 and CCL4. In terms of processing, O-glycosylated, but not N-glycosylated. Ser-6 appears to be the major site even if Ser-7 may be also O-glycosylated. Also sialylated glycans present which contribute to chemokine binding. Thr-16 and Ser-17 may also be glycosylated and, if so, with small moieties such as a T-antigen. Post-translationally, palmitoylation in the C-terminal is important for cell surface expression, and to a lesser extent, for HIV entry. Phosphorylation on serine residues in the C-terminal is stimulated by binding CC chemokines especially by APO-RANTES. Highly expressed in spleen, thymus, in the myeloid cell line THP-1, in the promyeloblastic cell line KG-1a and on CD4+ and CD8+ T-cells. Medium levels in peripheral blood leukocytes and in small intestine. Low levels in ovary and lung.

Its subcellular location is the cell membrane. In terms of biological role, receptor for a number of inflammatory CC-chemokines including CCL3/MIP-1-alpha, CCL4/MIP-1-beta and RANTES and subsequently transduces a signal by increasing the intracellular calcium ion level. May play a role in the control of granulocytic lineage proliferation or differentiation. Participates in T-lymphocyte migration to the infection site by acting as a chemotactic receptor. Functionally, (Microbial infection) Acts as a coreceptor (CD4 being the primary receptor) of human immunodeficiency virus-1/HIV-1. This chain is C-C chemokine receptor type 5, found in Homo sapiens (Human).